A 689-amino-acid chain; its full sequence is Shutoff protein (689 aa).

A disordered region spans residues 1–24; sequence MSEEPVSGTTVEIEEDTHTPPNSP. Residues 226–289 are binding to host EIF4G; that stretch reads VMNNLLVKRA…SVLVTVVLEC (64 aa). The RRM domain maps to 292 to 410; that stretch reads RLFTSKDMVK…PLYTETSQRL (119 aa). A phosphotyrosine; by host mark is found at tyrosine 309 and tyrosine 627. The tract at residues 625 to 689 is disordered; the sequence is GQYLDPHTGE…GEPDVRGTTS (65 aa). Basic and acidic residues predominate over residues 645–655; the sequence is SGHEFQGDGRH. A compositionally biased stretch (basic residues) spans 656-675; the sequence is REPKRGRHFRQRGGPRKPPR. The span at 678–689 shows a compositional bias: basic and acidic residues; the sequence is AGGEPDVRGTTS.

This sequence belongs to the adenoviridae shutoff protein family. As to quaternary structure, monomer. Interacts with hexon protein; this interaction allows chaperoning and trimerization of hexon proteins. Interacts (via N-terminus) with host initiation factor EIF4G (via C-terminus). Interacts (via RRM domain) with viral mRNAs that contain the tripartite leader; this interaction allows ribosome shunting and expression of viral late mRNAs. Might be cleaved by the viral protease. Post-translationally, phosphorylated. Tyrosine phosphorylation enhances preferential binding to tripartite leader mRNAs and allows ribosome shunting. In terms of processing, methylated. Asymmetric dimethylation by host PRMT1 of the Arg/Gly-rich region may regulate shutoff protein binding to hexon and promote the capsid assembly in the nucleus.

The protein resides in the host cytoplasm. Its function is as follows. Protein that inhibits host translation while promoting late viral translation by ribosome shunting. Blocks host cap-dependent translation by binding to eIF4G, displacing MKNK1 from cap initiation complexes and preventing EIF4E phosphorylation. Binds to the tripartite leader sequence of viral late mRNAs and recruits host eIF4G, PABPC1/poly-A binding protein and 40S ribosomes subunits on viral mRNAs, allowing ribosome shunting and efficient translation of late viral mRNAs even though conventional translation via ribosome scanning from the cap has been shut off in the host cell. During assembly, acts as a chaperone protein that helps hexon proteins assembly into trimers. This is Shutoff protein from Canis lupus familiaris (Dog).